The chain runs to 351 residues: Probable dual-specificity RNA methyltransferase RlmN (351 aa).

The active-site Proton acceptor is the glutamate 92. Positions 98–334 (SGDRLTVCVS…VRWSKGLGAD (237 aa)) constitute a Radical SAM core domain. A disulfide bridge links cysteine 105 with cysteine 337. Residues cysteine 112, cysteine 116, and cysteine 119 each contribute to the [4Fe-4S] cluster site. Residues 159–160 (GE), serine 189, 218–220 (SLH), and asparagine 294 each bind S-adenosyl-L-methionine. The S-methylcysteine intermediate role is filled by cysteine 337.

It belongs to the radical SAM superfamily. RlmN family. Requires [4Fe-4S] cluster as cofactor.

Its subcellular location is the cytoplasm. It catalyses the reaction adenosine(2503) in 23S rRNA + 2 reduced [2Fe-2S]-[ferredoxin] + 2 S-adenosyl-L-methionine = 2-methyladenosine(2503) in 23S rRNA + 5'-deoxyadenosine + L-methionine + 2 oxidized [2Fe-2S]-[ferredoxin] + S-adenosyl-L-homocysteine. The enzyme catalyses adenosine(37) in tRNA + 2 reduced [2Fe-2S]-[ferredoxin] + 2 S-adenosyl-L-methionine = 2-methyladenosine(37) in tRNA + 5'-deoxyadenosine + L-methionine + 2 oxidized [2Fe-2S]-[ferredoxin] + S-adenosyl-L-homocysteine. Specifically methylates position 2 of adenine 2503 in 23S rRNA and position 2 of adenine 37 in tRNAs. In Synechococcus sp. (strain ATCC 27144 / PCC 6301 / SAUG 1402/1) (Anacystis nidulans), this protein is Probable dual-specificity RNA methyltransferase RlmN.